The following is a 219-amino-acid chain: Pyridoxine/pyridoxamine 5'-phosphate oxidase (219 aa).

Residues 13 to 16 (RVEY) and Lys-76 each bind substrate. FMN-binding positions include 71 to 76 (RSVLCK), 86 to 87 (FT), Lys-93, and Gln-115. Residues Tyr-133, Arg-137, and Ser-141 each coordinate substrate. FMN contacts are provided by residues 150-151 (QS) and Trp-196. Position 202 to 204 (202 to 204 (RVH)) interacts with substrate. Residue Arg-206 participates in FMN binding.

The protein belongs to the pyridoxamine 5'-phosphate oxidase family. In terms of assembly, homodimer. Requires FMN as cofactor.

The catalysed reaction is pyridoxamine 5'-phosphate + O2 + H2O = pyridoxal 5'-phosphate + H2O2 + NH4(+). It catalyses the reaction pyridoxine 5'-phosphate + O2 = pyridoxal 5'-phosphate + H2O2. Its pathway is cofactor metabolism; pyridoxal 5'-phosphate salvage; pyridoxal 5'-phosphate from pyridoxamine 5'-phosphate: step 1/1. It functions in the pathway cofactor metabolism; pyridoxal 5'-phosphate salvage; pyridoxal 5'-phosphate from pyridoxine 5'-phosphate: step 1/1. In terms of biological role, catalyzes the oxidation of either pyridoxine 5'-phosphate (PNP) or pyridoxamine 5'-phosphate (PMP) into pyridoxal 5'-phosphate (PLP). This Mycobacterium leprae (strain TN) protein is Pyridoxine/pyridoxamine 5'-phosphate oxidase.